The following is a 304-amino-acid chain: Bifunctional protein FolD 3 (304 aa).

NADP(+) contacts are provided by residues Gly-172–Ser-174, Ser-197, and Ile-238.

Belongs to the tetrahydrofolate dehydrogenase/cyclohydrolase family. As to quaternary structure, homodimer.

The enzyme catalyses (6R)-5,10-methylene-5,6,7,8-tetrahydrofolate + NADP(+) = (6R)-5,10-methenyltetrahydrofolate + NADPH. The catalysed reaction is (6R)-5,10-methenyltetrahydrofolate + H2O = (6R)-10-formyltetrahydrofolate + H(+). It participates in one-carbon metabolism; tetrahydrofolate interconversion. Catalyzes the oxidation of 5,10-methylenetetrahydrofolate to 5,10-methenyltetrahydrofolate and then the hydrolysis of 5,10-methenyltetrahydrofolate to 10-formyltetrahydrofolate. The polypeptide is Bifunctional protein FolD 3 (Rhizorhabdus wittichii (strain DSM 6014 / CCUG 31198 / JCM 15750 / NBRC 105917 / EY 4224 / RW1) (Sphingomonas wittichii)).